We begin with the raw amino-acid sequence, 126 residues long: Protein ApaG (126 aa).

One can recognise an ApaG domain in the interval 2-126 (SDSRYKVDVS…FRLAVPGSLH (125 aa)).

The chain is Protein ApaG from Pseudomonas syringae pv. tomato (strain ATCC BAA-871 / DC3000).